A 252-amino-acid polypeptide reads, in one-letter code: Phosphoglycolate phosphatase (252 aa).

Asp13 serves as the catalytic Nucleophile. Residues Asp13, Asp15, and Asp192 each contribute to the Mg(2+) site.

The protein belongs to the HAD-like hydrolase superfamily. CbbY/CbbZ/Gph/YieH family. Monomer. Requires Mg(2+) as cofactor. Chloride serves as cofactor.

It catalyses the reaction 2-phosphoglycolate + H2O = glycolate + phosphate. The protein operates within organic acid metabolism; glycolate biosynthesis; glycolate from 2-phosphoglycolate: step 1/1. Functionally, specifically catalyzes the dephosphorylation of 2-phosphoglycolate. Is involved in the dissimilation of the intracellular 2-phosphoglycolate formed during the DNA repair of 3'-phosphoglycolate ends, a major class of DNA lesions induced by oxidative stress. The protein is Phosphoglycolate phosphatase of Shigella sonnei (strain Ss046).